Consider the following 228-residue polypeptide: Transcription repressor OFP8 (228 aa).

3 stretches are compositionally biased toward low complexity: residues 1 to 14 (MSGR…FSLR), 54 to 79 (ASST…TDSS), and 92 to 101 (EEPAAAQQEQ). Disordered regions lie at residues 1–21 (MSGR…VVDI) and 36–143 (SSSS…QLQE). Over residues 107-120 (RRRRRQQRRRRRRA) the composition is skewed to basic residues. Residues 157 to 216 (VAVESAEPYEDFRESMVQMVVEKEIYAWDDLNDLLHQFLSLNSPRHHPLILHAFADLWTR) enclose the OVATE domain.

In terms of assembly, interacts with GSK2. In terms of processing, phosphorylated on serine and threonine residues by GSK2. Dephosphorylated during response to brassinosteroid. In terms of tissue distribution, expressed in roots, stems, stem nodes, young leaves, leaf sheaths, lamina joints, young spikelets, inflorescences, stamens and ovaries, embryos and seeds.

The protein localises to the nucleus. The protein resides in the cytoplasm. In terms of biological role, probable transcriptional repressor that regulates multiple aspects of plant growth and development, partly through brassinosteroid (BR) signaling pathway. Acts downstream of the kinase GSK2, a negative regulator of BR signaling. The sequence is that of Transcription repressor OFP8 from Oryza sativa subsp. japonica (Rice).